The chain runs to 858 residues: MDLPAVLAAPATRGDQHGGGPSRLRRGAGPSLGAGPGRRRLLLLRGPEDGGPGPRPEEAPGPSPPPPEDGGDSFVVLLEVPRAADTHGQEEAEPDSGASPTEQVPAAAPGAALAGTVTIHNQDLLVRFDRGVFTLAAAPAPAAPSLHPATTPGLEPSSAAASRRGPVAASAGSPAYRCPEPQCALSFAKKHQLKVHLLTHGSLQGRRPFKCPLDGCGWAFTTSYKLKRHLQSHDKLRPFSCPVGGCGKKFTTVYNLKAHMKGHEQESLFKCEVCAERFPTHAKLNSHQRSHFEPERPYKCDFPGCEKTFITVSALFSHNRAHFREQELFSCSFPGCNKQYDKACRLKIHLRSHTGERPFICDSDSCGWTFTSMSKLLRHKRKHDDDRRFTCPVEGCGKSFTRAEHLKGHSITHLGTKPFECPVEGCCARFSARSSLYIHSKKHLQDVGTPKSRCPVSSCNRLFTSKHSMKAHVVRQHSRRQDLVPQLEAPSSLTPSSELSSPGQSELTNIDLAALFSDTPANSSSSTAGSDEALNSGILTIDVTSVSSSLGGNLPTNNNSLGPMDPLVLVAHGDMPPSLDSPLVLGTSATVLQPGSFSADDSQAMSTGAVGCLVALPVRNLNQDSPALTPSNNLTAPGTTPTSSDTTQETGSVPDLLVPIKVEQDLSPVPDVVQGQKESHGPSQSVLSSSTERPGAQKDSELSAGTGSLYLESGGSARTDYRAIQLVKKKKQKGTGSDEGASDSAHRKVKGGTINPPHVHSGQHSCFCGTLMVPSGGLTVPAPAAGLQCVQIPVLQDDPSGEGGLPLGLSPQRSAFHPYFTVDLPVYVLQEVLPAPGGFAGLETAQVPGSTINLRDLE.

Disordered stretches follow at residues 1–73 (MDLP…GGDS), 85–108 (DTHG…PAAA), and 142–175 (AAPS…GSPA). A compositionally biased stretch (pro residues) spans 59–68 (APGPSPPPPE). The segment covering 142-152 (AAPSLHPATTP) has biased composition (low complexity). 10 C2H2-type zinc fingers span residues 176 to 200 (YRCP…LLTH), 209 to 233 (FKCP…LQSH), 239 to 263 (FSCP…MKGH), 269 to 291 (FKCE…QRSH), 298 to 322 (YKCD…NRAH), 329 to 353 (FSCS…LRSH), 359 to 383 (FICD…KRKH), 389 to 413 (FTCP…SITH), 419 to 443 (FECP…SKKH), and 452 to 477 (SRCP…VRQH). The span at 624–634 (DSPALTPSNNL) shows a compositional bias: polar residues. The tract at residues 624-652 (DSPALTPSNNLTAPGTTPTSSDTTQETGS) is disordered. The span at 635-651 (TAPGTTPTSSDTTQETG) shows a compositional bias: low complexity. Residue K661 forms a Glycyl lysine isopeptide (Lys-Gly) (interchain with G-Cter in SUMO) linkage. Disordered stretches follow at residues 671–714 (DVVQ…LESG) and 727–751 (VKKK…KVKG). The segment covering 681-692 (GPSQSVLSSSTE) has biased composition (polar residues).

The protein belongs to the ZXD family. As to quaternary structure, self-associates. Interacts with ZXDB and CIITA. In terms of processing, sumoylated at Lys-661 with SUMO1, SUMO2 and SUMO3; sumoylation enhances the activity of the transcriptional activation domain.

It localises to the nucleus. In terms of biological role, cooperates with CIITA to promote transcription of MHC class I and MHC class II genes. The sequence is that of Zinc finger protein ZXDC (Zxdc) from Mus musculus (Mouse).